The chain runs to 70 residues: Bowman-Birk type proteinase inhibitor A-II (70 aa).

Intrachain disulfides connect Cys-11–Cys-68, Cys-12–Cys-29, Cys-15–Cys-63, Cys-17–Cys-27, Cys-36–Cys-43, Cys-40–Cys-55, and Cys-45–Cys-53.

Belongs to the Bowman-Birk serine protease inhibitor family.

Its function is as follows. These proteins inhibit trypsin and chymotrypsin, having 2 sites of interaction with trypsin. The site of interaction with chymotrypsin has not been determined but is not independent of the trypsin-reactive sites. The sequence is that of Bowman-Birk type proteinase inhibitor A-II from Arachis hypogaea (Peanut).